A 237-amino-acid polypeptide reads, in one-letter code: Undecaprenyl-diphosphatase (237 aa).

Helical transmembrane passes span 38-58 (QTAV…FDGI), 65-85 (WRII…GVLF), 92-112 (LFSS…ILMF), 126-146 (MSFL…FPGI), 166-186 (ALQY…ILGL), 191-211 (ITIL…YVLS), and 217-237 (GKIW…YLVG).

The protein belongs to the UppP family.

It localises to the cell inner membrane. The enzyme catalyses di-trans,octa-cis-undecaprenyl diphosphate + H2O = di-trans,octa-cis-undecaprenyl phosphate + phosphate + H(+). In terms of biological role, catalyzes the dephosphorylation of undecaprenyl diphosphate (UPP). Confers resistance to bacitracin. This chain is Undecaprenyl-diphosphatase, found in Thermotoga petrophila (strain ATCC BAA-488 / DSM 13995 / JCM 10881 / RKU-1).